We begin with the raw amino-acid sequence, 149 residues long: Large ribosomal subunit protein bL9 (149 aa).

Belongs to the bacterial ribosomal protein bL9 family.

Its function is as follows. Binds to the 23S rRNA. This Legionella pneumophila (strain Lens) protein is Large ribosomal subunit protein bL9.